We begin with the raw amino-acid sequence, 165 residues long: Pro-MCH (165 aa).

A signal peptide spans methionine 1 to glycine 21. A compositionally biased stretch (basic and acidic residues) spans aspartate 69–threonine 82. The tract at residues aspartate 69 to glutamine 89 is disordered. Isoleucine 143 carries the isoleucine amide modification. An intrachain disulfide couples cysteine 153 to cysteine 162.

This sequence belongs to the melanin-concentrating hormone family. Post-translationally, pro-MCH is processed differentially in the brain and in peripheral organs producing two neuropeptides; NEI and MCH. A third peptide, NGE, may also be produced. Preferential processing in neurons by prohormone convertase 2 (PC2) generates NEI. MCH is generated in neurons of the lateral hypothalmic area by several prohormone convertases including PC1/3, PC2 and PC5/6. In terms of tissue distribution, MCH is present in all regions of the brain and in neurointermediate lobe of the pituarity gland, with highest concentrations in the hypothalamus. Also expressed to a much lesser extent in stomach, lamina propria of both duodenum and colon, ovary, thymus, pancreas, adrenal gland and testis (spermatogonia, early spermatocytes and Sertoli cells). Weak expression in heart and lung. The other peptides are expressed at least in Sertoli cells, nei being also expressed in brain, stomach and proximal duodenum. In brain exclusively mature mch and nei peptides are present. In peripheral tissues a large product, encompassing the NEI and MCH domains of the precursor, is found predominantly. At low levels fully processed MCH and NEI peptides are present in gut. No expression in peripheral blood.

It localises to the secreted. In terms of biological role, MCH inhibits ACTH secretion at the end of the light on period which corresponds to the peak of the circadian rhythm in ACTH. Inhibits also stress induced ACTH release during the light off period of the cycle. Involved as a neurotransmitter or neuromodulator in a broad array of neuronal functions. Stimulates sexual behavior when injected into the ventromedial nucleus, this effect is antagonized by NEI. In the medial preoptic area, stimulates anxiety and sexual behavior. Antagonizes inhibitory effect of melanotropin alpha on exploration behavior. Functionally, NEI can influence differentiation of neuronal processes in brain neurons. Affects the content of neurofilament protein in neuritogenesis (in vitro). May also be a neuromodulatory factor. In behavioral tests, it stimulates exploration and anxiety when injected into the ventromedial nucleus. Also stimulates grooming, locomotion and rearing. May antagonize the inhibitory effect of mch on ACTH release. Reduces dopamine and dopac release in the ventromedial nucleus. In Rattus norvegicus (Rat), this protein is Pro-MCH (Pmch).